A 488-amino-acid polypeptide reads, in one-letter code: Protein unzipped (488 aa).

Positions 1 to 21 (MTSNSCLISLGLLLVLIQILA) are cleaved as a signal peptide. Topologically, residues 22–465 (PAKAAEHSVF…DVALAGFGVN (444 aa)) are extracellular. N-linked (GlcNAc...) asparagine glycans are attached at residues Asn35, Asn232, Asn317, and Asn374. The segment covering 380–400 (TTTTTTTTSTSTTTHATTTST) has biased composition (low complexity). The interval 380–453 (TTTTTTTTST…EAPENMSSDP (74 aa)) is disordered. Asn448 carries N-linked (GlcNAc...) asparagine glycosylation. The chain crosses the membrane as a helical span at residues 466-486 (AAGSTFIAGSALLTLLLTIFL). At 487–488 (SL) the chain is on the cytoplasmic side.

Its subcellular location is the membrane. Functionally, required for normal axon patterning during neurogenesis. The polypeptide is Protein unzipped (uzip) (Drosophila melanogaster (Fruit fly)).